Reading from the N-terminus, the 807-residue chain is DNA gyrase subunit B (807 aa).

The 115-residue stretch at 429-543 folds into the Toprim domain; sequence SELFIVEGDS…KGYLYIAQPP (115 aa). 3 residues coordinate Mg(2+): glutamate 435, aspartate 508, and aspartate 510.

It belongs to the type II topoisomerase GyrB family. In terms of assembly, heterotetramer, composed of two GyrA and two GyrB chains. In the heterotetramer, GyrA contains the active site tyrosine that forms a transient covalent intermediate with DNA, while GyrB binds cofactors and catalyzes ATP hydrolysis. Mg(2+) serves as cofactor. It depends on Mn(2+) as a cofactor. Requires Ca(2+) as cofactor.

It localises to the cytoplasm. The catalysed reaction is ATP-dependent breakage, passage and rejoining of double-stranded DNA.. Its function is as follows. A type II topoisomerase that negatively supercoils closed circular double-stranded (ds) DNA in an ATP-dependent manner to modulate DNA topology and maintain chromosomes in an underwound state. Negative supercoiling favors strand separation, and DNA replication, transcription, recombination and repair, all of which involve strand separation. Also able to catalyze the interconversion of other topological isomers of dsDNA rings, including catenanes and knotted rings. Type II topoisomerases break and join 2 DNA strands simultaneously in an ATP-dependent manner. This chain is DNA gyrase subunit B, found in Rickettsia typhi (strain ATCC VR-144 / Wilmington).